A 242-amino-acid chain; its full sequence is tRNA pseudouridine synthase A (242 aa).

Aspartate 51 (nucleophile) is an active-site residue. Position 107 (tyrosine 107) interacts with substrate.

Belongs to the tRNA pseudouridine synthase TruA family. As to quaternary structure, homodimer.

The enzyme catalyses uridine(38/39/40) in tRNA = pseudouridine(38/39/40) in tRNA. Formation of pseudouridine at positions 38, 39 and 40 in the anticodon stem and loop of transfer RNAs. In Helicobacter pylori (strain J99 / ATCC 700824) (Campylobacter pylori J99), this protein is tRNA pseudouridine synthase A.